A 70-amino-acid polypeptide reads, in one-letter code: DNA-directed RNA polymerase subunit epsilon (70 aa).

This sequence belongs to the RNA polymerase subunit epsilon family. As to quaternary structure, RNAP is composed of a core of 2 alpha, a beta and a beta' subunit. The core is associated with a delta subunit, and at least one of epsilon or omega. When a sigma factor is associated with the core the holoenzyme is formed, which can initiate transcription.

It carries out the reaction RNA(n) + a ribonucleoside 5'-triphosphate = RNA(n+1) + diphosphate. A non-essential component of RNA polymerase (RNAP). This is DNA-directed RNA polymerase subunit epsilon from Limosilactobacillus reuteri (strain DSM 20016) (Lactobacillus reuteri).